The chain runs to 283 residues: Pantothenate synthetase (283 aa).

31-38 (MGALHDGH) is a binding site for ATP. The active-site Proton donor is His-38. Gln-62 provides a ligand contact to (R)-pantoate. Residue Gln-62 participates in beta-alanine binding. Residue 148-151 (GKKD) participates in ATP binding. (R)-pantoate is bound at residue Gln-154. ATP contacts are provided by residues Val-177 and 185 to 188 (KSSR).

This sequence belongs to the pantothenate synthetase family. In terms of assembly, homodimer.

The protein localises to the cytoplasm. It carries out the reaction (R)-pantoate + beta-alanine + ATP = (R)-pantothenate + AMP + diphosphate + H(+). The protein operates within cofactor biosynthesis; (R)-pantothenate biosynthesis; (R)-pantothenate from (R)-pantoate and beta-alanine: step 1/1. Its function is as follows. Catalyzes the condensation of pantoate with beta-alanine in an ATP-dependent reaction via a pantoyl-adenylate intermediate. This Staphylococcus aureus (strain USA300) protein is Pantothenate synthetase.